A 419-amino-acid polypeptide reads, in one-letter code: Peptide chain release factor subunit 1 (419 aa).

The protein belongs to the eukaryotic release factor 1 family. In terms of assembly, heterodimer of two subunits, one of which binds GTP.

Its subcellular location is the cytoplasm. Directs the termination of nascent peptide synthesis (translation) in response to the termination codons UAA, UAG and UGA. The polypeptide is Peptide chain release factor subunit 1 (Methanococcus maripaludis (strain C5 / ATCC BAA-1333)).